We begin with the raw amino-acid sequence, 292 residues long: Elongation factor Ts (292 aa).

The involved in Mg(2+) ion dislocation from EF-Tu stretch occupies residues 79 to 82 (TDFV).

It belongs to the EF-Ts family.

The protein resides in the cytoplasm. Functionally, associates with the EF-Tu.GDP complex and induces the exchange of GDP to GTP. It remains bound to the aminoacyl-tRNA.EF-Tu.GTP complex up to the GTP hydrolysis stage on the ribosome. The sequence is that of Elongation factor Ts from Malacoplasma penetrans (strain HF-2) (Mycoplasma penetrans).